We begin with the raw amino-acid sequence, 146 residues long: Mitochondrial pyruvate carrier 3 (146 aa).

Residues 1-20 (MSASAFNFAFRRFWNSETGP) constitute a mitochondrion transit peptide. 3 helical membrane passes run 23-39 (VHFW…FAGL), 55-71 (LSLL…SFVI), and 78-94 (LASV…YHLT).

Belongs to the mitochondrial pyruvate carrier (MPC) (TC 2.A.105) family. As to quaternary structure, the functional 150 kDa pyruvate import complex is a heteromer of MPC1 and either MPC2 or MPC3.

It is found in the mitochondrion. The protein localises to the mitochondrion inner membrane. Mediates the uptake of pyruvate into mitochondria. This chain is Mitochondrial pyruvate carrier 3, found in Saccharomyces cerevisiae (strain ATCC 204508 / S288c) (Baker's yeast).